A 245-amino-acid chain; its full sequence is Fibroblast growth factor 13 (245 aa).

Residues 1–36 (MAAAIASSLIRQKRQAREREKSNACKCVSSPSKGKT) form a disordered region. A mediates targeting to the nucleus region spans residues 1-62 (MAAAIASSLI…GSKKRRRRRP (62 aa)). The mediates interaction with sodium channels stretch occupies residues 67 to 201 (KGIVTKLYSR…AHFLPKPLKV (135 aa)). The segment at 157-164 (SMIYRQQQ) is tubulin-binding domain necessary and sufficient for tubulin-binding. A Phosphoserine modification is found at Ser-208. The disordered stretch occupies residues 213 to 245 (TEFSRSGSGTPTKSRSVSGVLNGGKSMSHNEST). Residues 215 to 245 (FSRSGSGTPTKSRSVSGVLNGGKSMSHNEST) show a composition bias toward polar residues.

This sequence belongs to the heparin-binding growth factors family. Interacts with SCN8A; regulates SCN8A activity. Interacts with SCN1A; may regulate SCN1A activity. Interacts with SCN5A; the interaction is direct and may regulate SNC5A density at membranes and function. May also interact with SCN2A and SCN11A. Interacts with MAPK8IP2; may regulate the MAPK8IP2 scaffolding activity. May be phosphorylated. As to expression, detected in brain, eye and heart. In brain, the different isoforms display different patterns of expression. Expressed in brain and heart (at protein level). Isoform 3 is highly expressed in cardiac myocytes while isoform 1 is the most abundant in brain.

Its subcellular location is the cell projection. It is found in the filopodium. The protein localises to the growth cone. It localises to the dendrite. The protein resides in the cell membrane. Its subcellular location is the sarcolemma. It is found in the cytoplasm. The protein localises to the nucleus. In terms of biological role, microtubule-binding protein which directly binds tubulin and is involved in both polymerization and stabilization of microtubules. Through its action on microtubules, may participate to the refinement of axons by negatively regulating axonal and leading processes branching. Plays a crucial role in neuron polarization and migration in the cerebral cortex and the hippocampus. Regulates voltage-gated sodium channel transport and function. May also play a role in MAPK signaling. Required for the development of axonal initial segment-targeting inhibitory GABAergic synapses made by chandelier neurons. Seems not to be involved in neuroblast polarization and migration but regulates axon branching. The chain is Fibroblast growth factor 13 from Mus musculus (Mouse).